The sequence spans 861 residues: E3 ubiquitin-protein ligase HECTD3 (861 aa).

An N-acetylalanine modification is found at A2. S12 is modified (phosphoserine). Positions 219–397 (DEDLIHFLYD…TSLVRYPRLE (179 aa)) constitute a DOC domain. Residues 512–857 (YEKPLDYRWP…NCVAIDTDMS (346 aa)) enclose the HECT domain. C823 serves as the catalytic Glycyl thioester intermediate.

In terms of assembly, interacts with TRIOBP. Interacts with STX8.

The protein localises to the cytoplasm. The protein resides in the perinuclear region. It catalyses the reaction S-ubiquitinyl-[E2 ubiquitin-conjugating enzyme]-L-cysteine + [acceptor protein]-L-lysine = [E2 ubiquitin-conjugating enzyme]-L-cysteine + N(6)-ubiquitinyl-[acceptor protein]-L-lysine.. The protein operates within protein modification; protein ubiquitination. Its function is as follows. E3 ubiquitin ligases accepts ubiquitin from an E2 ubiquitin-conjugating enzyme in the form of a thioester and then directly transfers the ubiquitin to targeted substrates. Mediates ubiquitination of TRIOBP and its subsequent proteasomal degradation, thus facilitating cell cycle progression by regulating the turn-over of TRIOBP. Mediates also ubiquitination of STX8. This is E3 ubiquitin-protein ligase HECTD3 (HECTD3) from Homo sapiens (Human).